A 580-amino-acid chain; its full sequence is MDRNSVTGLALIALIMIVWLQFMSPDKKPVIRESAKKAASVEQVNVPLKPAPVSASDAFGAFASAANGKARKMVVENDLFRATISSKGATLTSLVLKKHLDGALQPVQLVSNRADGALSLLFLTREGRKIDTRDLYFTGGSVDTLHTVTGKESYSVRYRLNVSKNRNILITYSFTGDSYRVGYDVQLNGFSSALAGNEYQLQWDGGLGYTEKNREDEAHNALAGAYLGGSLVKLDAAKDNQAYREEQSGEAKWVAVRNKYFVAALIPAGPTGGFYLDGSKKAGNEFENYLASLKMEVPVSGASLDNSFSLYMGPLDYDIVRAQKAELEKIMDFGWDWLTRPFAEYIILPVFSWMNKFIHNYGLIIIIFAFLIKLVTYPLSLASTKSMKKMAALQPMLKELQDKYKDNPAKLQSELGRIYKEAGVNPLGGCLPVVLQMPLLFAMFYVFRSSIELRQHGFLWAHDLSVPDSILNLGFTIPMYGDHIALMPILMAGTVFVQQKITPTAQTNDQMKIMLYMFPAMMLLFFNNMPSGLGLYYLMFNVFSVAQQFYINSTTTEADMPNVSIAAPARQKKKKSGGGK.

6 helical membrane passes run 5 to 25, 259 to 279, 362 to 382, 427 to 447, 477 to 497, and 513 to 533; these read SVTGLALIALIMIVWLQFMSP, KYFVAALIPAGPTGGFYLDGS, GLIIIIFAFLIKLVTYPLSLA, LGGCLPVVLQMPLLFAMFYVF, IPMYGDHIALMPILMAGTVFV, and IMLYMFPAMMLLFFNNMPSGL.

Belongs to the OXA1/ALB3/YidC family. Type 1 subfamily. As to quaternary structure, interacts with the Sec translocase complex via SecD. Specifically interacts with transmembrane segments of nascent integral membrane proteins during membrane integration.

Its subcellular location is the cell inner membrane. In terms of biological role, required for the insertion and/or proper folding and/or complex formation of integral membrane proteins into the membrane. Involved in integration of membrane proteins that insert both dependently and independently of the Sec translocase complex, as well as at least some lipoproteins. Aids folding of multispanning membrane proteins. In Chlorobium phaeovibrioides (strain DSM 265 / 1930) (Prosthecochloris vibrioformis (strain DSM 265)), this protein is Membrane protein insertase YidC.